The sequence spans 64 residues: Large ribosomal subunit protein bL35 (64 aa).

Residues 1-14 (MKQKTHKGTAKRVK) are compositionally biased toward basic residues. The interval 1-50 (MKQKTHKGTAKRVKITGSGKLRREQANRRHLLEGKPSKRTRRLKGTEDVA) is disordered. The segment covering 21–36 (LRREQANRRHLLEGKP) has biased composition (basic and acidic residues).

The protein belongs to the bacterial ribosomal protein bL35 family.

This chain is Large ribosomal subunit protein bL35, found in Corynebacterium diphtheriae (strain ATCC 700971 / NCTC 13129 / Biotype gravis).